We begin with the raw amino-acid sequence, 318 residues long: tRNA pseudouridine synthase B (318 aa).

Asp47 acts as the Nucleophile in catalysis.

The protein belongs to the pseudouridine synthase TruB family. Type 1 subfamily.

The enzyme catalyses uridine(55) in tRNA = pseudouridine(55) in tRNA. Its function is as follows. Responsible for synthesis of pseudouridine from uracil-55 in the psi GC loop of transfer RNAs. The protein is tRNA pseudouridine synthase B of Shewanella putrefaciens (strain CN-32 / ATCC BAA-453).